The chain runs to 908 residues: Glutamate receptor ionotropic, kainate 2 (908 aa).

Positions 1–31 (MKIIFPILSNPVFRRTVKLLLCLLWIGYSQG) are cleaved as a signal peptide. Topologically, residues 32-561 (TTHVLRFGGI…VFSFLNPLSP (530 aa)) are extracellular. N-linked (GlcNAc...) asparagine glycosylation is found at N67, N73, N275, N378, N412, N423, and N430. C96 and C347 are disulfide-bonded. 3 residues coordinate L-glutamate: P516, A518, and R523. N546 carries N-linked (GlcNAc...) asparagine glycosylation. The chain crosses the membrane as a helical span at residues 562 to 582 (DIWMYVLLACLGVSCVLFVIA). Topologically, residues 583–638 (RFSPYEWYNPHPCNPDSDVVENNFTLLNSFWFGVGALMRQGSELMPKALSTRIVGG) are cytoplasmic. Residues 639–659 (IWWFFTLIIISSYTANLAAFL) form a helical membrane-spanning segment. Topologically, residues 660–819 (TVERMESPID…KEASALGVQN (160 aa)) are extracellular. Residues A689, T690, and E738 each contribute to the L-glutamate site. Residues C750 and C804 are joined by a disulfide bond. N751 carries N-linked (GlcNAc...) asparagine glycosylation. A helical membrane pass occupies residues 820-840 (IGGIFIVLAAGLVLSVFVAVG). Residues 841 to 908 (EFLYKSKKNA…RRLPGKETMA (68 aa)) lie on the Cytoplasmic side of the membrane. A phosphoserine; by PKC mark is found at S846 and S868. Residue K886 forms a Glycyl lysine isopeptide (Lys-Gly) (interchain with G-Cter in SUMO1) linkage.

Belongs to the glutamate-gated ion channel (TC 1.A.10.1) family. GRIK2 subfamily. As to quaternary structure, homotetramer and heterotetramer with GRIK5. Tetramers may be formed by the dimerization of dimers. Assembles into a kainate-gated homomeric channel that does not bind AMPA. Can form functional heteromeric receptors with GRIK3, GRIK4 and GRIK5. Interacts with NETO2. Interacts with DLG4. Interacts with NETO2. Interacts (via C-terminus) with KLHL17 (via kelch repeats); the interaction targets GRIK2 for degradation via ubiquitin-proteasome pathway. In terms of processing, sumoylation mediates kainate receptor-mediated endocytosis and regulates synaptic transmission. Sumoylation is enhanced by PIAS3 and desumoylated by SENP1. Post-translationally, ubiquitinated. Ubiquitination regulates the GRIK2 levels at the synapse by leading kainate receptor degradation through proteasome. Phosphorylated by PKC at Ser-868 upon agonist activation, this directly enhance sumoylation.

It is found in the cell membrane. It localises to the postsynaptic cell membrane. It carries out the reaction Ca(2+)(in) = Ca(2+)(out). The catalysed reaction is Na(+)(in) = Na(+)(out). With respect to regulation, cold receptor activity activated by temperatures between 10-19 degrees Celsius. Its function is as follows. Ionotropic glutamate receptor that functions as a cation-permeable ligand-gated ion channel, gated by L-glutamate and the glutamatergic agonist kainic acid. L-glutamate acts as an excitatory neurotransmitter at many synapses in the central nervous system. Binding of the excitatory neurotransmitter L-glutamate induces a conformation change, leading to the opening of the cation channel, and thereby converts the chemical signal to an electrical impulse. The receptor then desensitizes rapidly and enters a transient inactive state, characterized by the presence of bound agonist. Modulates cell surface expression of NETO2. In association with GRIK3, involved in presynaptic facilitation of glutamate release at hippocampal mossy fiber synapses. In terms of biological role, independent of its ionotropic glutamate receptor activity, acts as a thermoreceptor conferring sensitivity to cold temperatures. Functions in dorsal root ganglion neurons. The polypeptide is Glutamate receptor ionotropic, kainate 2 (GRIK2) (Macaca fascicularis (Crab-eating macaque)).